The following is a 431-amino-acid chain: Gamma-glutamyl phosphate reductase (431 aa).

It belongs to the gamma-glutamyl phosphate reductase family.

It is found in the cytoplasm. The enzyme catalyses L-glutamate 5-semialdehyde + phosphate + NADP(+) = L-glutamyl 5-phosphate + NADPH + H(+). The protein operates within amino-acid biosynthesis; L-proline biosynthesis; L-glutamate 5-semialdehyde from L-glutamate: step 2/2. Catalyzes the NADPH-dependent reduction of L-glutamate 5-phosphate into L-glutamate 5-semialdehyde and phosphate. The product spontaneously undergoes cyclization to form 1-pyrroline-5-carboxylate. The protein is Gamma-glutamyl phosphate reductase of Beijerinckia indica subsp. indica (strain ATCC 9039 / DSM 1715 / NCIMB 8712).